The sequence spans 151 residues: MGSDDLSTGDKIQKGFQINYMILRDADTGKVIWQENKDFSAPDLEHEARVPVKILDMRAVSREINFSTIEAMENFRLDQKVLFKGRIMEEWFFEMGFVGANTTNTWQSTIEAAPESQMMPAKVLNGNVTIQTSFYDNETLITKSVVRLYYI.

It belongs to the PDE6D/unc-119 family. In terms of assembly, interacts with Pde6.

The protein localises to the nucleus. It is found in the cytoplasm. The protein is Probable cGMP 3',5'-cyclic phosphodiesterase subunit delta of Drosophila grimshawi (Hawaiian fruit fly).